Reading from the N-terminus, the 436-residue chain is Histidinol dehydrogenase (436 aa).

NAD(+) is bound by residues Tyr-130, Gln-191, and Asn-214. Positions 237, 259, and 262 each coordinate substrate. Zn(2+)-binding residues include Gln-259 and His-262. Catalysis depends on proton acceptor residues Glu-327 and His-328. Substrate is bound by residues His-328, Asp-361, Glu-415, and His-420. Asp-361 is a Zn(2+) binding site. His-420 is a Zn(2+) binding site.

It belongs to the histidinol dehydrogenase family. The cofactor is Zn(2+).

The enzyme catalyses L-histidinol + 2 NAD(+) + H2O = L-histidine + 2 NADH + 3 H(+). It functions in the pathway amino-acid biosynthesis; L-histidine biosynthesis; L-histidine from 5-phospho-alpha-D-ribose 1-diphosphate: step 9/9. In terms of biological role, catalyzes the sequential NAD-dependent oxidations of L-histidinol to L-histidinaldehyde and then to L-histidine. This Geobacter metallireducens (strain ATCC 53774 / DSM 7210 / GS-15) protein is Histidinol dehydrogenase.